The primary structure comprises 146 residues: MYPAHLLVLLAVCVSLLGAASIPPLPLNLVQFSYVITCANHGRRSSLDYADYGCYCGAGGSGTPVDELDRCCQIHDDCYGEAEKQGCYPKMLIYDYYCGSDGPYCRNVKKKCNRMVCDCDVAAAKCFARNAYNNANYNIDTNKRCK.

A signal peptide spans 1 to 21 (MYPAHLLVLLAVCVSLLGAAS). Positions 22-27 (IPPLPL) are excised as a propeptide. Intrachain disulfides connect cysteine 38–cysteine 98, cysteine 54–cysteine 145, cysteine 56–cysteine 72, cysteine 71–cysteine 126, cysteine 78–cysteine 119, cysteine 87–cysteine 112, and cysteine 105–cysteine 117. Ca(2+) is bound by residues tyrosine 55, glycine 57, and glycine 59. Histidine 75 is a catalytic residue. Residue aspartate 76 participates in Ca(2+) binding. Aspartate 120 is a catalytic residue.

It belongs to the phospholipase A2 family. Group I subfamily. D49 sub-subfamily. Ca(2+) is required as a cofactor. In terms of tissue distribution, expressed by the venom gland.

The protein resides in the secreted. It catalyses the reaction a 1,2-diacyl-sn-glycero-3-phosphocholine + H2O = a 1-acyl-sn-glycero-3-phosphocholine + a fatty acid + H(+). Its function is as follows. Snake venom phospholipase A2 (PLA2) that inhibits neuromuscular transmission by blocking acetylcholine release from the nerve termini. PLA2 catalyzes the calcium-dependent hydrolysis of the 2-acyl groups in 3-sn-phosphoglycerides. The sequence is that of Basic phospholipase A2 from Hydrophis hardwickii (Hardwick's spine-bellied seasnake).